Here is a 734-residue protein sequence, read N- to C-terminus: Monosaccharide-sensing protein 1 (734 aa).

6 helical membrane-spanning segments follow: residues 6–26, 44–64, 79–99, 102–122, 133–153, and 163–183; these read LVALAATIGNFLQGWDNATIA, GLVVAMSLIGATVITTCSGPI, VMYFVCGLIMLWSPNVYVLCF, LLNGFGAGLAVTLVPVYISET, TLPQFLGSGGMFLSYCMVFTM, and AMLGVLSIPSLLYLFLTVFYL. A disordered region spans residues 351–403; the sequence is YNKDNDDYATDDGAGDDDDSDNDLRSPLMSRQTTSMDKDMIPHPTSGSTLSMR. A compositionally biased stretch (acidic residues) spans 357–371; the sequence is DYATDDGAGDDDDSD. Ser-446 and Ser-480 each carry phosphoserine. A run of 6 helical transmembrane segments spans residues 510–530, 556–576, 588–608, 621–641, 653–673, and 680–700; these read ALVVGVGIQILQQFSGINGVL, ASFLISGLTTLLMLPAIVVAM, LLWTIPVLIVSLVVLVISELI, GCVVLYFCFFVMGYGPIPNIL, LCIAICAMVFWIGDIIVTYSL, and IGLVGVFSIYAAVCVISWIFV.

It belongs to the major facilitator superfamily. Sugar transporter (TC 2.A.1.1) family. As to quaternary structure, binds to VIK at the tonoplast. Phosphorylated by VIK; this activation promotes carrier activity. As to expression, mostly expressed in juvenile and adult leaves, to a lower extent, in flower tissues, and, at low levels, in roots and stems.

The protein localises to the vacuole membrane. It carries out the reaction D-glucose(out) + H(+)(in) = D-glucose(in) + H(+)(out). The enzyme catalyses sucrose(out) + H(+)(in) = sucrose(in) + H(+)(out). Enhanced activation by VIK-mediated phosphorylation promoting carrier activity and consequently vacuolar sugar accumulation. In terms of biological role, sugar proton-coupled antiporter which contributes to vacuolar sugar import (e.g. monosaccharides including glucose, sucrose and fructose), particularly during stress responses (e.g. in response to cold). Required for cytosolic glucose homeostasis. The protein is Monosaccharide-sensing protein 1 of Arabidopsis thaliana (Mouse-ear cress).